The following is a 319-amino-acid chain: Acetyl esterase (319 aa).

The short motif at 91–93 (HGG) is the Involved in the stabilization of the negatively charged intermediate by the formation of the oxyanion hole element. Active-site residues include Ser165, Asp262, and His292.

The protein belongs to the 'GDXG' lipolytic enzyme family. As to quaternary structure, homodimer. Interacts with MalT and MelA.

The protein resides in the cytoplasm. In terms of biological role, displays esterase activity towards short chain fatty esters (acyl chain length of up to 8 carbons). Able to hydrolyze triacetylglycerol (triacetin) and tributyrylglycerol (tributyrin), but not trioleylglycerol (triolein) or cholesterol oleate. Negatively regulates MalT activity by antagonizing maltotriose binding. Inhibits MelA galactosidase activity. In Escherichia coli O6:H1 (strain CFT073 / ATCC 700928 / UPEC), this protein is Acetyl esterase.